Consider the following 385-residue polypeptide: dTDP-4-dehydro-2,3,6-trideoxy-D-glucose 4-aminotransferase (385 aa).

N6-(pyridoxal phosphate)lysine is present on Lys182.

This sequence belongs to the DegT/DnrJ/EryC1 family. Homodimer. It depends on pyridoxal 5'-phosphate as a cofactor.

It catalyses the reaction dTDP-4-amino-2,3,4,6-tetradeoxy-alpha-D-erythro-hexopyranose + 2-oxoglutarate = dTDP-4-dehydro-2,3,6-trideoxy-alpha-D-hexopyranose + L-glutamate. Involved in the biosynthesis of forosamine ((4-dimethylamino)-2,3,4,6-tetradeoxy-alpha-D-threo-hexopyranose), a highly deoxygenated sugar component of several bioactive natural products such as the insecticidal spinosyns A and D. In the presence of pyridoxal 5'-phosphate (PLP) and alpha-ketoglutarate, catalyzes the C-4 transamination of dTDP-4-keto-2,3,6-trideoxy-alpha-D-glucose to yield dTDP-4-amino-2,3,4,6-tetradeoxy-alpha-D-glucose. It can also use pyruvate, but less efficiently than alpha-ketoglutarate. Also able to catalyze the C-4 transamination of dTDP-4-keto-2,6-dideoxy-alpha-D-glucose to yield dTDP-4-amino-2,4,6-trideoxy-D-glucose. The sequence is that of dTDP-4-dehydro-2,3,6-trideoxy-D-glucose 4-aminotransferase from Saccharopolyspora spinosa.